We begin with the raw amino-acid sequence, 98 residues long: Large ribosomal subunit protein bL25 (98 aa).

Residues 1–22 (MANFVLNATARNEDKQGKGASR) are disordered.

It belongs to the bacterial ribosomal protein bL25 family. Part of the 50S ribosomal subunit; part of the 5S rRNA/L5/L18/L25 subcomplex. Contacts the 5S rRNA. Binds to the 5S rRNA independently of L5 and L18.

In terms of biological role, this is one of the proteins that binds to the 5S RNA in the ribosome where it forms part of the central protuberance. The chain is Large ribosomal subunit protein bL25 from Acinetobacter baylyi (strain ATCC 33305 / BD413 / ADP1).